A 159-amino-acid polypeptide reads, in one-letter code: Style cell-cycle inhibitor 1 (159 aa).

The segment at 1 to 86 is disordered; sequence MVSERSSKEK…SDHKLKEGIP (86 aa). Residues 15 to 50 are compositionally biased toward basic and acidic residues; that stretch reads ARSEDSSSSDYEEKVKRHRGTEKDDERRSRRSDKKD. Residues 51 to 63 are compositionally biased toward basic residues; it reads KKSHKHHKSSTSK. Basic and acidic residues predominate over residues 64 to 85; the sequence is KSKDDKPKKKHTESDHKLKEGI.

Its subcellular location is the nucleus. Component of the auxin signaling transduction pathway that regulates cell proliferation and differentiation during flowers stigmas and styles development. Involved in the regulation of auxin-related genes. The chain is Style cell-cycle inhibitor 1 from Arabidopsis thaliana (Mouse-ear cress).